A 318-amino-acid chain; its full sequence is 2-keto-3-deoxygluconate permease (318 aa).

The next 10 helical transmembrane spans lie at 10-30 (IPGG…TFTP), 42-62 (GLIT…GASI), 76-96 (VLVV…GAFL), 105-125 (LLAG…NGGL), 139-159 (AGAF…VILG), 162-182 (GIAT…LIGF), 199-219 (VQTL…LSVI), 224-244 (FAGI…LILA), 254-274 (TAGI…LLIA), and 289-309 (ALVA…TALW).

It belongs to the KdgT transporter family.

Its subcellular location is the cell inner membrane. The catalysed reaction is 2-dehydro-3-deoxy-D-gluconate(in) + H(+)(in) = 2-dehydro-3-deoxy-D-gluconate(out) + H(+)(out). Functionally, catalyzes the proton-dependent uptake of 2-keto-3-deoxygluconate (KDG) into the cell. This is 2-keto-3-deoxygluconate permease from Pectobacterium atrosepticum (strain SCRI 1043 / ATCC BAA-672) (Erwinia carotovora subsp. atroseptica).